Reading from the N-terminus, the 218-residue chain is Cytochrome b6 (218 aa).

The chain crosses the membrane as a helical span at residues 35–55 (IFYCLGGITLVCFLVQFATGF). Cys-38 is a binding site for heme c. Heme b-binding residues include His-89 and His-103. Helical transmembrane passes span 93–113 (ASMM…TGGF), 119–139 (LTWV…VTGY), and 189–209 (LHTF…FLMI). Heme b contacts are provided by His-190 and His-205.

The protein belongs to the cytochrome b family. PetB subfamily. In terms of assembly, the 4 large subunits of the cytochrome b6-f complex are cytochrome b6, subunit IV (17 kDa polypeptide, PetD), cytochrome f and the Rieske protein, while the 4 small subunits are PetG, PetL, PetM and PetN. The complex functions as a dimer. Requires heme b as cofactor. The cofactor is heme c.

The protein resides in the cellular thylakoid membrane. Component of the cytochrome b6-f complex, which mediates electron transfer between photosystem II (PSII) and photosystem I (PSI), cyclic electron flow around PSI, and state transitions. This Prochlorococcus marinus (strain MIT 9303) protein is Cytochrome b6.